The primary structure comprises 92 residues: Small ribosomal subunit protein bS18 (92 aa).

It belongs to the bacterial ribosomal protein bS18 family. In terms of assembly, part of the 30S ribosomal subunit. Forms a tight heterodimer with protein bS6.

Functionally, binds as a heterodimer with protein bS6 to the central domain of the 16S rRNA, where it helps stabilize the platform of the 30S subunit. The protein is Small ribosomal subunit protein bS18 of Cupriavidus taiwanensis (strain DSM 17343 / BCRC 17206 / CCUG 44338 / CIP 107171 / LMG 19424 / R1) (Ralstonia taiwanensis (strain LMG 19424)).